A 432-amino-acid polypeptide reads, in one-letter code: Ribosomal protein uS12 methylthiotransferase RimO (432 aa).

Residues 4 to 122 form the MTTase N-terminal domain; sequence KTIDIITLGC…LLQDLGKAYH (119 aa). [4Fe-4S] cluster-binding residues include cysteine 13, cysteine 51, cysteine 85, cysteine 146, cysteine 150, and cysteine 153. The 232-residue stretch at 132 to 363 folds into the Radical SAM core domain; sequence TTPKHYAYLK…MAIQQGISTE (232 aa). A TRAM domain is found at 366 to 432; the sequence is ASKVGQKMKV…DEFDLFGEII (67 aa).

It belongs to the methylthiotransferase family. RimO subfamily. It depends on [4Fe-4S] cluster as a cofactor.

The protein resides in the cytoplasm. The catalysed reaction is L-aspartate(89)-[ribosomal protein uS12]-hydrogen + (sulfur carrier)-SH + AH2 + 2 S-adenosyl-L-methionine = 3-methylsulfanyl-L-aspartate(89)-[ribosomal protein uS12]-hydrogen + (sulfur carrier)-H + 5'-deoxyadenosine + L-methionine + A + S-adenosyl-L-homocysteine + 2 H(+). Functionally, catalyzes the methylthiolation of an aspartic acid residue of ribosomal protein uS12. The polypeptide is Ribosomal protein uS12 methylthiotransferase RimO (Bacteroides fragilis (strain ATCC 25285 / DSM 2151 / CCUG 4856 / JCM 11019 / LMG 10263 / NCTC 9343 / Onslow / VPI 2553 / EN-2)).